Consider the following 419-residue polypeptide: DNA primase DnaG (419 aa).

The region spanning 168 to 244 is the Toprim domain; that stretch reads DTIIVVEGRS…KVDYVARAPE (77 aa). Mg(2+) contacts are provided by Glu-174, Asp-218, and Asp-220. Composition is skewed to basic and acidic residues over residues 280-291 and 306-316; these read KPAEEAVKREEE and KAAKPPEEKPP. The disordered stretch occupies residues 280–317; the sequence is KPAEEAVKREEEAAAEAKPPAPAVQEKAAKPPEEKPPT.

It belongs to the archaeal DnaG primase family. As to quaternary structure, forms a ternary complex with MCM helicase and DNA. Component of the archaeal exosome complex. Mg(2+) is required as a cofactor.

The enzyme catalyses ssDNA + n NTP = ssDNA/pppN(pN)n-1 hybrid + (n-1) diphosphate.. RNA polymerase that catalyzes the synthesis of short RNA molecules used as primers for DNA polymerase during DNA replication. Also part of the exosome, which is a complex involved in RNA degradation. Acts as a poly(A)-binding protein that enhances the interaction between heteromeric, adenine-rich transcripts and the exosome. The sequence is that of DNA primase DnaG from Aeropyrum pernix (strain ATCC 700893 / DSM 11879 / JCM 9820 / NBRC 100138 / K1).